The following is an 830-amino-acid chain: Envelope glycoprotein B (830 aa).

The first 22 residues, 1–22 (MSKMAVLFLAVFLMNSVLMIYC), serve as a signal peptide directing secretion. The Virion surface segment spans residues 23–688 (DPDHYIRAGY…GGVVSFLKNP (666 aa)). 4 cysteine pairs are disulfide-bonded: cysteine 41/cysteine 482, cysteine 58/cysteine 438, cysteine 131/cysteine 197, and cysteine 290/cysteine 337. Positions 98–104 (SYRDVGV) are involved in fusion and/or binding to host membrane. Asparagine 155 carries N-linked (GlcNAc...) asparagine; by host glycosylation. Residues 184-191 (GPLWLYST) are involved in fusion and/or binding to host membrane. N-linked (GlcNAc...) asparagine; by host glycans are attached at residues asparagine 228, asparagine 247, asparagine 286, asparagine 307, asparagine 329, asparagine 355, asparagine 361, and asparagine 486. A disulfide bond links cysteine 510 and cysteine 548. Hydrophobic membrane proximal region stretches follow at residues 634-686 (IEAK…SFLK) and 644-685 (SYVN…VSFL). Residues 689–709 (FGGGLMLILAIVVVVIIIVVF) traverse the membrane as a helical segment. Topologically, residues 710–830 (VRQRHVLSKP…GYKSVNVEEA (121 aa)) are intravirion. The Internalization motif motif lies at 822-825 (YKSV).

It belongs to the herpesviridae glycoprotein B family. In terms of assembly, homotrimer; disulfide-linked. Binds to heparan sulfate proteoglycans. Interacts with gH/gL heterodimer. A proteolytic cleavage by host furin generates two subunits that remain linked by disulfide bonds.

The protein localises to the virion membrane. It localises to the host cell membrane. It is found in the host endosome membrane. Its subcellular location is the host Golgi apparatus membrane. Its function is as follows. Envelope glycoprotein that forms spikes at the surface of virion envelope. Essential for the initial attachment to heparan sulfate moieties of the host cell surface proteoglycans. Involved in fusion of viral and cellular membranes leading to virus entry into the host cell. Following initial binding to its host receptors, membrane fusion is mediated by the fusion machinery composed at least of gB and the heterodimer gH/gL. May be involved in the fusion between the virion envelope and the outer nuclear membrane during virion egress. This Human herpesvirus 6A (strain Uganda-1102) (HHV-6 variant A) protein is Envelope glycoprotein B.